A 417-amino-acid polypeptide reads, in one-letter code: Serine protease hepsin (417 aa).

Over 1–23 (MAQKEGGRTVPCCSRPKVAALTA) the chain is Cytoplasmic. The helical; Signal-anchor for type II membrane protein transmembrane segment at 24–44 (GTLLLLTAIGAASWAIVAVLL) threads the bilayer. Residues 45 to 417 (RSDQEPLYPV…SEASGMVTQL (373 aa)) are Extracellular-facing. The SRCR domain occupies 54 to 151 (VQVSSADARL…RGRFLATICQ (98 aa)). Intrachain disulfides connect Cys77–Cys140, Cys90–Cys150, Cys119–Cys138, Cys153–Cys277, Cys188–Cys204, Cys291–Cys359, Cys322–Cys338, and Cys349–Cys381. A glycan (N-linked (GlcNAc...) asparagine) is linked at Asn112. Positions 163 to 405 (IVGGRDTSLG…FREWIFQAIK (243 aa)) constitute a Peptidase S1 domain. Catalysis depends on charge relay system residues His203 and Asp257. Ser353 acts as the Charge relay system in catalysis.

The protein belongs to the peptidase S1 family.

It localises to the membrane. It carries out the reaction Cleavage after basic amino-acid residues, with Arg strongly preferred to Lys.. Plays an essential role in cell growth and maintenance of cell morphology. May mediate the activating cleavage of HGF and MST1/HGFL. Plays a role in the proteolytic processing of ACE2. This Pongo abelii (Sumatran orangutan) protein is Serine protease hepsin (HPN).